A 95-amino-acid polypeptide reads, in one-letter code: Small ribosomal subunit protein bS18 (95 aa).

Belongs to the bacterial ribosomal protein bS18 family. Part of the 30S ribosomal subunit. Forms a tight heterodimer with protein bS6.

Functionally, binds as a heterodimer with protein bS6 to the central domain of the 16S rRNA, where it helps stabilize the platform of the 30S subunit. This Ehrlichia canis (strain Jake) protein is Small ribosomal subunit protein bS18.